The sequence spans 24 residues: M-ectatotoxin-Eb2b (24 aa).

In terms of tissue distribution, expressed by the venom gland.

The protein localises to the secreted. Functionally, antimicrobial peptide active against Gram-negative bacterium E.coli MH1 (MIC=2.5 uM) and P.aeruginosa PAO1 (MIC=10 uM) and against Gram-positive bacterium A.globiformis VKM Ac-1112 (MIC=0.6 uM). This is M-ectatotoxin-Eb2b from Ectatomma brunneum (Ant).